A 310-amino-acid polypeptide reads, in one-letter code: tRNA dimethylallyltransferase (310 aa).

An ATP-binding site is contributed by 14–21; the sequence is GPTASGKT. Residue 16 to 21 coordinates substrate; the sequence is TASGKT. 3 interaction with substrate tRNA regions span residues 39–42, 163–167, and 244–249; these read DSAL, QRLSR, and RCVGYR.

This sequence belongs to the IPP transferase family. As to quaternary structure, monomer. Requires Mg(2+) as cofactor.

It catalyses the reaction adenosine(37) in tRNA + dimethylallyl diphosphate = N(6)-dimethylallyladenosine(37) in tRNA + diphosphate. Catalyzes the transfer of a dimethylallyl group onto the adenine at position 37 in tRNAs that read codons beginning with uridine, leading to the formation of N6-(dimethylallyl)adenosine (i(6)A). This Tolumonas auensis (strain DSM 9187 / NBRC 110442 / TA 4) protein is tRNA dimethylallyltransferase.